The following is a 358-amino-acid chain: Methionine import ATP-binding protein MetN (358 aa).

The region spanning 2-247 (ITTTGLTKVY…PGSELAHELF (246 aa)) is the ABC transporter domain. 38–45 (GQSGAGKS) lines the ATP pocket.

This sequence belongs to the ABC transporter superfamily. Methionine importer (TC 3.A.1.24) family. In terms of assembly, the complex is composed of two ATP-binding proteins (MetN), two transmembrane proteins (MetI) and a solute-binding protein (MetQ).

The protein resides in the cell membrane. The catalysed reaction is L-methionine(out) + ATP + H2O = L-methionine(in) + ADP + phosphate + H(+). The enzyme catalyses D-methionine(out) + ATP + H2O = D-methionine(in) + ADP + phosphate + H(+). Its function is as follows. Part of the ABC transporter complex MetNIQ involved in methionine import. Responsible for energy coupling to the transport system. The sequence is that of Methionine import ATP-binding protein MetN from Streptomyces griseus.